The chain runs to 56 residues: Large ribosomal subunit protein eL24 (56 aa).

The Zn(2+) site is built by Cys6, Cys9, Cys32, and Cys36. Residues 6 to 36 form a C4-type zinc finger; sequence CSFCNTRITPGTGKLYAKKDGTVYYFCSSKC.

Belongs to the eukaryotic ribosomal protein eL24 family. As to quaternary structure, part of the 50S ribosomal subunit. Forms a cluster with proteins L3 and L14. Zn(2+) serves as cofactor.

In terms of biological role, binds to the 23S rRNA. The sequence is that of Large ribosomal subunit protein eL24 from Methanothrix thermoacetophila (strain DSM 6194 / JCM 14653 / NBRC 101360 / PT) (Methanosaeta thermophila).